Consider the following 276-residue polypeptide: Golgi apparatus membrane protein TVP23 homolog C (276 aa).

The residue at position 1 (methionine 1) is an N-acetylmethionine. Positions 1–21 are disordered; it reads MLQQDSNDDTEDVSLFDAEEE. Helical transmembrane passes span 52–72 and 126–146; these read LLCE…ILLL and IFWL…FSAL. Residues 254–276 are disordered; sequence GESPNSRGTGEPGPKFHLASGMH.

This sequence belongs to the TVP23 family.

The protein localises to the membrane. The sequence is that of Golgi apparatus membrane protein TVP23 homolog C (TVP23C) from Homo sapiens (Human).